A 206-amino-acid chain; its full sequence is Pyridoxine/pyridoxamine 5'-phosphate oxidase (206 aa).

Residues 53 to 58, 68 to 69, Lys-75, and Gln-97 each bind FMN; these read RMVLLK and YT. Lys-58 is a substrate binding site. Positions 115, 119, and 123 each coordinate substrate. Residues 132-133 and Trp-177 each bind FMN; that span reads QS. 183–185 is a binding site for substrate; the sequence is RLH. Arg-187 provides a ligand contact to FMN.

The protein belongs to the pyridoxamine 5'-phosphate oxidase family. Homodimer. FMN serves as cofactor.

The enzyme catalyses pyridoxamine 5'-phosphate + O2 + H2O = pyridoxal 5'-phosphate + H2O2 + NH4(+). It catalyses the reaction pyridoxine 5'-phosphate + O2 = pyridoxal 5'-phosphate + H2O2. Its pathway is cofactor metabolism; pyridoxal 5'-phosphate salvage; pyridoxal 5'-phosphate from pyridoxamine 5'-phosphate: step 1/1. The protein operates within cofactor metabolism; pyridoxal 5'-phosphate salvage; pyridoxal 5'-phosphate from pyridoxine 5'-phosphate: step 1/1. Functionally, catalyzes the oxidation of either pyridoxine 5'-phosphate (PNP) or pyridoxamine 5'-phosphate (PMP) into pyridoxal 5'-phosphate (PLP). This chain is Pyridoxine/pyridoxamine 5'-phosphate oxidase, found in Rhizobium etli (strain CIAT 652).